A 197-amino-acid chain; its full sequence is Recombination protein RecR (197 aa).

The C4-type zinc finger occupies 56-71 (CQQCRTLTEQALCNIC). Positions 79 to 174 (KELCIVETPA…KVSRIAHGIP (96 aa)) constitute a Toprim domain.

Belongs to the RecR family.

In terms of biological role, may play a role in DNA repair. It seems to be involved in an RecBC-independent recombinational process of DNA repair. It may act with RecF and RecO. The polypeptide is Recombination protein RecR (Saccharophagus degradans (strain 2-40 / ATCC 43961 / DSM 17024)).